The following is a 296-amino-acid chain: Diguanylate cyclase DgcS (296 aa).

Residues 165 to 293 enclose the GGDEF domain; sequence GSVSLIVLDL…GRNCYKLSPT (129 aa). Residues Asp-173, Leu-174, and Asp-216 each coordinate Mg(2+). The active site involves Asp-216.

The cofactor is Mg(2+).

It catalyses the reaction 2 GTP = 3',3'-c-di-GMP + 2 diphosphate. In terms of biological role, catalyzes the synthesis of cyclic-di-GMP (c-di-GMP) via the condensation of 2 GTP molecules. May be involved in the regulation of formation of solid surface-associated biofilms and pellicles according to environmental conditions. The sequence is that of Diguanylate cyclase DgcS from Shewanella oneidensis (strain ATCC 700550 / JCM 31522 / CIP 106686 / LMG 19005 / NCIMB 14063 / MR-1).